Here is a 205-residue protein sequence, read N- to C-terminus: Ribosomal RNA small subunit methyltransferase G (205 aa).

S-adenosyl-L-methionine is bound by residues glycine 70, leucine 75, 124-125, and arginine 138; that span reads IE.

This sequence belongs to the methyltransferase superfamily. RNA methyltransferase RsmG family.

It localises to the cytoplasm. It catalyses the reaction guanosine(527) in 16S rRNA + S-adenosyl-L-methionine = N(7)-methylguanosine(527) in 16S rRNA + S-adenosyl-L-homocysteine. Functionally, specifically methylates the N7 position of guanine in position 527 of 16S rRNA. This Ruegeria sp. (strain TM1040) (Silicibacter sp.) protein is Ribosomal RNA small subunit methyltransferase G.